A 1820-amino-acid polypeptide reads, in one-letter code: uncharacterized protein (1820 aa).

9 disordered regions span residues M1 to G73, T86 to A158, G226 to Y260, E286 to E366, D453 to S497, L519 to A548, G577 to P597, G619 to G689, and H735 to S830. Positions N20–N31 are enriched in polar residues. The span at T86 to H128 shows a compositional bias: low complexity. Basic residues predominate over residues H129–T146. Over residues S247–N259 the composition is skewed to low complexity. A coiled-coil region spans residues V265–K308. Positions D294 to E305 are enriched in basic and acidic residues. Over residues A346 to G358 the composition is skewed to low complexity. The stretch at T362–Q438 forms a coiled coil. A compositionally biased stretch (polar residues) spans D453–N463. Phosphoserine is present on residues S542 and S543. A compositionally biased stretch (low complexity) spans G623–S632. The span at H655–T669 shows a compositional bias: gly residues. Over residues N738–A769 the composition is skewed to low complexity. Residues Q787–G818 show a composition bias toward polar residues. PH domains are found at residues S909 to R1003 and K1017 to G1124. A phosphoserine mark is found at S1073, S1075, and S1077. The 220-residue stretch at H1159–L1378 folds into the MyTH4 domain. An FERM domain is found at H1389 to V1712. Disordered stretches follow at residues P1713–F1748 and A1764–K1820. Positions G1714–N1724 are enriched in polar residues. The segment covering A1764–H1781 has biased composition (low complexity). Over residues H1805–K1820 the composition is skewed to basic and acidic residues.

This is an uncharacterized protein from Drosophila melanogaster (Fruit fly).